Consider the following 581-residue polypeptide: Leucine-rich repeat-containing protein 47 (581 aa).

LRR repeat units lie at residues Gln-78–Leu-97, Ala-102–Gly-123, Gln-132–Ala-154, Arg-156–Pro-177, Leu-182–Ala-204, Ser-205–Pro-227, and Lys-228–Val-248. The tract at residues Ala-262–Ala-301 is disordered. Basic and acidic residues predominate over residues Gly-271–Asp-280. Residues Ser-314, Ser-430, and Ser-519 each carry the phosphoserine modification. Positions Leu-401–Arg-436 form a coiled coil.

The polypeptide is Leucine-rich repeat-containing protein 47 (Lrrc47) (Mus musculus (Mouse)).